Reading from the N-terminus, the 366-residue chain is 3-dehydroquinate synthase (366 aa).

Residues 69-74 (DGEAYK), 103-107 (GVIGD), 127-128 (TT), Lys140, and Lys149 contribute to the NAD(+) site. Zn(2+) is bound by residues Glu182, His245, and His262.

Belongs to the sugar phosphate cyclases superfamily. Dehydroquinate synthase family. The cofactor is Co(2+). Zn(2+) serves as cofactor. NAD(+) is required as a cofactor.

It localises to the cytoplasm. It catalyses the reaction 7-phospho-2-dehydro-3-deoxy-D-arabino-heptonate = 3-dehydroquinate + phosphate. The protein operates within metabolic intermediate biosynthesis; chorismate biosynthesis; chorismate from D-erythrose 4-phosphate and phosphoenolpyruvate: step 2/7. Its function is as follows. Catalyzes the conversion of 3-deoxy-D-arabino-heptulosonate 7-phosphate (DAHP) to dehydroquinate (DHQ). This chain is 3-dehydroquinate synthase, found in Pseudomonas fluorescens (strain ATCC BAA-477 / NRRL B-23932 / Pf-5).